A 340-amino-acid chain; its full sequence is MDSAAPALSPALTAHTGHSATADLAIQIPKCPDPERYFYTSQCPDINHLRSLSILNRWLETELVFVGDEEDVSKLSEGELSFYRFLFAFLSAADDLVTENLGGLSGLFEQKDILHYYVEQECIEVAHSRVYNIIQLVLFHNNDQARREYVAGTINHPAIRAKVDWLEARVRECASVPEKFILMILIEGIFFAASFAAIAYLRTNNLLRVTCQSNDLISRDEAVHTTASCYIYNNYLGGHAKPPPDRVYGLFRQAVEIEIGFIRSQAPTDSHILSPAALAAIENYVRFSADRLLGLIHMKPLFSAPPPDASFPLSLMSTDKHTNFFECRSTSYAGAVVNDL.

Positions 94, 124, and 127 each coordinate Fe cation. Tyrosine 131 is a catalytic residue. The chain crosses the membrane as a helical span at residues phenylalanine 180–tyrosine 200. Residues glutamate 187, glutamate 221, and histidine 224 each coordinate Fe cation.

This sequence belongs to the ribonucleoside diphosphate reductase small chain family. As to quaternary structure, heterotetramer composed of a homodimer of the large subunit (R1) and a homodimer of the small subunit (R2). Larger multisubunit protein complex are also active, composed of (R1)n(R2)n. Requires Fe cation as cofactor.

The protein localises to the host membrane. The catalysed reaction is a 2'-deoxyribonucleoside 5'-diphosphate + [thioredoxin]-disulfide + H2O = a ribonucleoside 5'-diphosphate + [thioredoxin]-dithiol. In terms of biological role, ribonucleoside-diphosphate reductase holoenzyme provides the precursors necessary for viral DNA synthesis. Allows virus growth in non-dividing cells, as well as reactivation from latency in infected hosts. Catalyzes the biosynthesis of deoxyribonucleotides from the corresponding ribonucleotides. This is Ribonucleoside-diphosphate reductase small subunit from Human herpesvirus 1 (strain KOS) (HHV-1).